Here is a 73-residue protein sequence, read N- to C-terminus: EAGIECDCGSPENPCCDAATCKLRPGAQCADGLCCDQCRFIKKGKICRRARGDNPDDRCTGQSADCPRNRFHA.

Residues Glu1–Ala73 form the Disintegrin domain. Cystine bridges form between Cys6/Cys21, Cys8/Cys16, Cys15/Cys38, Cys29/Cys35, Cys34/Cys59, and Cys47/Cys66. The short motif at Arg51–Asp53 is the Cell attachment site element.

It belongs to the venom metalloproteinase (M12B) family. P-II subfamily. P-IIa sub-subfamily. As to quaternary structure, monomer (disintegrin). In terms of tissue distribution, expressed by the venom gland.

The protein localises to the secreted. In terms of biological role, inhibits fibrinogen interaction with platelets. Acts by binding to alpha-IIb/beta-3 (ITGA2B/ITGB3) on the platelet surface and inhibits aggregation induced by ADP, thrombin, platelet-activating factor and collagen. In Crotalus molossus molossus (Northern black-tailed rattlesnake), this protein is Disintegrin molossin.